A 434-amino-acid polypeptide reads, in one-letter code: Serine--tRNA ligase (434 aa).

Position 241-243 (T241–E243) interacts with L-serine. An ATP-binding site is contributed by R272–E274. E295 contacts L-serine. E359 to S362 contacts ATP. S395 provides a ligand contact to L-serine.

This sequence belongs to the class-II aminoacyl-tRNA synthetase family. Type-1 seryl-tRNA synthetase subfamily. Homodimer. The tRNA molecule binds across the dimer.

Its subcellular location is the cytoplasm. The enzyme catalyses tRNA(Ser) + L-serine + ATP = L-seryl-tRNA(Ser) + AMP + diphosphate + H(+). It catalyses the reaction tRNA(Sec) + L-serine + ATP = L-seryl-tRNA(Sec) + AMP + diphosphate + H(+). It participates in aminoacyl-tRNA biosynthesis; selenocysteinyl-tRNA(Sec) biosynthesis; L-seryl-tRNA(Sec) from L-serine and tRNA(Sec): step 1/1. Functionally, catalyzes the attachment of serine to tRNA(Ser). Is also able to aminoacylate tRNA(Sec) with serine, to form the misacylated tRNA L-seryl-tRNA(Sec), which will be further converted into selenocysteinyl-tRNA(Sec). This Glaesserella parasuis serovar 5 (strain SH0165) (Haemophilus parasuis) protein is Serine--tRNA ligase.